A 121-amino-acid polypeptide reads, in one-letter code: uncharacterized protein (121 aa).

Disordered regions lie at residues Met1–Asp28 and Gln60–Leu82. Phosphoserine is present on residues Ser95 and Ser115.

Expressed in spleen, prostate, testis and uterus.

This is an uncharacterized protein from Homo sapiens (Human).